Here is a 1133-residue protein sequence, read N- to C-terminus: Early transcription factor large subunit homolog (1133 aa).

A Helicase ATP-binding domain is found at 52-352 (KGGRAFFPCD…PNGQPLQRQQ (301 aa)). 99–106 (WQTGTGKS) contributes to the ATP binding site. The short motif at 281–284 (DEIH) is the DEAH box element. Residues 524–724 (MMKDILSIIR…EGDKALRKHA (201 aa)) form the Helicase C-terminal domain.

The protein belongs to the DEAD box helicase family. DEAH subfamily.

It localises to the virion. The enzyme catalyses ATP + H2O = ADP + phosphate + H(+). Functionally, putative initation factor. The protein is Early transcription factor large subunit homolog of Ornithodoros (relapsing fever ticks).